Reading from the N-terminus, the 390-residue chain is Neuromedin-B receptor (390 aa).

The segment covering 1–19 (MPSKSLSNLSVTTGANESG) has biased composition (polar residues). The tract at residues 1 to 22 (MPSKSLSNLSVTTGANESGSVP) is disordered. At 1-41 (MPSKSLSNLSVTTGANESGSVPEGWERDFLPASDGTTTELV) the chain is on the extracellular side. Residues Asn8 and Asn16 are each glycosylated (N-linked (GlcNAc...) asparagine). A helical membrane pass occupies residues 42-65 (IRCVIPSLYLLIITVGLLGNIMLV). At 66–79 (KIFITNSAMRSVPN) the chain is on the cytoplasmic side. Residues 80–99 (IFISNLAAGDLLLLLTCVPV) traverse the membrane as a helical segment. Topologically, residues 100 to 117 (DASRYFFDEWMFGKVGCK) are extracellular. Residues Cys116 and Cys198 are joined by a disulfide bond. The helical transmembrane segment at 118–139 (LIPVIQLTSVGVSVFTLTALSA) threads the bilayer. Residues 140-156 (DRYRAIVNPMDMQTSGA) are Cytoplasmic-facing. Residues 157 to 177 (LLRTCVKAMGIWVVSVLLAVP) form a helical membrane-spanning segment. At 178–211 (EAVFSEVARISSLDNSSFTACIPYPQTDELHPKI) the chain is on the extracellular side. N-linked (GlcNAc...) asparagine glycosylation is present at Asn192. A helical transmembrane segment spans residues 212-235 (HSVLIFLVYFLIPLAIISIYYYHI). The Cytoplasmic portion of the chain corresponds to 236-266 (AKTLIKSAHNLPGEYNEHTKKQMETRKRLAK). The helical transmembrane segment at 267 to 287 (IVLVFVGCFIFCWFPNHILYM) threads the bilayer. At 288 to 299 (YRSFNYNEIDPS) the chain is on the extracellular side. Residues 300–327 (LGHMIVTLVARVLSFGNSCVNPFALYLL) traverse the membrane as a helical segment. At 328 to 390 (SESFRRHFNS…GHSMKQEMAL (63 aa)) the chain is on the cytoplasmic side. A lipid anchor (S-palmitoyl cysteine) is attached at Cys341. Position 352 is a phosphoserine (Ser352).

Belongs to the G-protein coupled receptor 1 family. Expressed in epididymis (at protein level).

Its subcellular location is the cell membrane. Receptor for neuromedin-B. Contributes to the maintenance of basal sigh rate through signaling in the pre-Botzinger complex, a cluster of several thousand neurons in the ventrolateral medulla responsible for inspiration during respiratory activity. Contributes to the induction of sneezing following exposure to chemical irritants or allergens which causes release of NMB by nasal sensory neurons and activation of NMBR-expressing neurons in the sneeze-evoking region of the brainstem. These in turn activate neurons of the caudal ventral respiratory group, giving rise to the sneezing response. Contributes to induction of acute itch, possibly through its activation on dorsal root ganglion neurons by the NMB peptide. Plays a role in the innate immune response to influenza A virus infection by enhancing interferon alpha expression and reducing expression of IL6. Plays a role in CSF1-induced proliferation of osteoclast precursors by contributing to the positive regulation of the expression of the CSF1 receptor CSF1R. In Homo sapiens (Human), this protein is Neuromedin-B receptor (NMBR).